The sequence spans 231 residues: Large ribosomal subunit protein uL1 (231 aa).

This sequence belongs to the universal ribosomal protein uL1 family. As to quaternary structure, part of the 50S ribosomal subunit.

Its function is as follows. Binds directly to 23S rRNA. The L1 stalk is quite mobile in the ribosome, and is involved in E site tRNA release. In terms of biological role, protein L1 is also a translational repressor protein, it controls the translation of the L11 operon by binding to its mRNA. The chain is Large ribosomal subunit protein uL1 from Buchnera aphidicola subsp. Acyrthosiphon pisum (strain 5A).